Consider the following 288-residue polypeptide: MKAFLLSLATLLACIVLTESAPHSADVREEAFDALVRSYLQAVQRDSHMENLTCAECQGVTERNCTLGERQVQCNPGEVCTTLEAFNLDTGTTTVTRGCFNITGLNCGDNPGCGALNTTGNIQSCDQFCCNTSLCNAGTLTTVTPQTTDGNTTTEAPTSTEPPTNASTEAPTSTEPPTNASTEAPTSTEPPTNASTEAPTTTEAPTTTEAPTTTEAPTTTETPTTTETPTTTAAPTTTETPTTTAAPTTTPAPTTTPAPTTPFFCNATLAGLSGTFTSPNFQLITQTG.

The signal sequence occupies residues M1–S20. Positions T141–G150 are enriched in polar residues. Residues T141–T260 are disordered. The segment covering N151–P253 has biased composition (low complexity).

In terms of tissue distribution, component of the acid-insoluble and acid-soluble organic matrix of the aragonitic skeleton (at protein level).

It localises to the secreted. In Acropora millepora (Staghorn coral), this protein is Threonine-rich protein.